The sequence spans 217 residues: UPF0323 lipoprotein HPSH_01205 (217 aa).

Residues M1–G27 form the signal peptide. The N-palmitoyl cysteine moiety is linked to residue C28. Residue C28 is the site of S-diacylglycerol cysteine attachment. Polar residues predominate over residues Q160–R171. Residues Q160–S217 are disordered. Residues S172 to S210 show a composition bias toward low complexity.

Belongs to the UPF0323 family.

It localises to the cell membrane. The polypeptide is UPF0323 lipoprotein HPSH_01205 (Helicobacter pylori (strain Shi470)).